Consider the following 393-residue polypeptide: ATP phosphoribosyltransferase regulatory subunit (393 aa).

This sequence belongs to the class-II aminoacyl-tRNA synthetase family. HisZ subfamily. Heteromultimer composed of HisG and HisZ subunits.

The protein localises to the cytoplasm. It functions in the pathway amino-acid biosynthesis; L-histidine biosynthesis; L-histidine from 5-phospho-alpha-D-ribose 1-diphosphate: step 1/9. Required for the first step of histidine biosynthesis. May allow the feedback regulation of ATP phosphoribosyltransferase activity by histidine. This is ATP phosphoribosyltransferase regulatory subunit from Synechococcus sp. (strain RCC307).